Reading from the N-terminus, the 416-residue chain is Tumor necrosis factor receptor superfamily member 16 (416 aa).

The N-terminal stretch at 1-19 (MAGFVPLLLLLLPAGPTWG) is a signal peptide. TNFR-Cys repeat units follow at residues 23–57 (KCLT…TVCE), 58–99 (PCLD…DAVC), 100–138 (RCAY…DTVC), and 140–180 (ECPE…DAEC). 12 disulfide bridges follow: Cys-24–Cys-35, Cys-36–Cys-49, Cys-39–Cys-56, Cys-59–Cys-75, Cys-78–Cys-91, Cys-81–Cys-99, Cys-101–Cys-114, Cys-117–Cys-130, Cys-120–Cys-138, Cys-141–Cys-156, Cys-159–Cys-172, and Cys-162–Cys-180. Topologically, residues 29–239 (YTTSGECCKA…PVVSRGTADN (211 aa)) are extracellular. Asn-52 carries N-linked (GlcNAc...) asparagine glycosylation. A helical membrane pass occupies residues 240–261 (LIPVYCSILAAVVVGLVAYIAF). Topologically, residues 262–416 (KRWNSCKQNK…YSESTATSPV (155 aa)) are cytoplasmic. Composition is skewed to polar residues over residues 270-284 (NKQG…QTPS) and 294-315 (SGIS…STQG). A disordered region spans residues 270 to 328 (NKQGANNRPVNQTPSPEGEKLHSDSGISVDSQSLHDQQPPNQSTQGPAPKGDGSLYASL). The 78-residue stretch at 333-410 (QEEVEKLLSS…DIAESLYSES (78 aa)) folds into the Death domain.

As to quaternary structure, homodimer; disulfide-linked. Heterodimer with SORCS2. The extracellular domains of the heterodimer bind NGF. N- and O-glycosylated. In terms of processing, phosphorylated on serine residues. In terms of tissue distribution, detected in embryonic dorsal root ganglion and retina.

It localises to the cell membrane. Its subcellular location is the perikaryon. The protein resides in the cell projection. It is found in the growth cone. The protein localises to the dendritic spine. In terms of biological role, low affinity receptor which can bind to NGF, BDNF, NTF3, and NTF4. Forms a heterodimeric receptor with SORCS2 that binds the precursor forms of NGF, BDNF and NTF3 with high affinity, and has much lower affinity for mature NGF and BDNF. Plays an important role in differentiation and survival of specific neuronal populations during development. Can mediate cell survival as well as cell death of neural cells. Plays a role in the inactivation of RHOA. Necessary for the circadian oscillation of clock genes in the suprachiasmatic nucleus (SCmgetaN) of the brain and in liver and of the genes involved in glucose and lipid metabolism in the liver. This chain is Tumor necrosis factor receptor superfamily member 16 (NGFR), found in Gallus gallus (Chicken).